The sequence spans 539 residues: GMP synthase [glutamine-hydrolyzing] (539 aa).

The 199-residue stretch at 4–202 folds into the Glutamine amidotransferase type-1 domain; it reads KILILDFGSQ…VLQIAGAKPD (199 aa). Catalysis depends on Cys-81, which acts as the Nucleophile. Active-site residues include His-176 and Glu-178. The region spanning 203–395 is the GMPS ATP-PPase domain; sequence WIMSNHIEEA…LGLPPEMVYR (193 aa). ATP is bound at residue 230 to 236; that stretch reads SGGVDSS.

Homodimer.

The enzyme catalyses XMP + L-glutamine + ATP + H2O = GMP + L-glutamate + AMP + diphosphate + 2 H(+). It functions in the pathway purine metabolism; GMP biosynthesis; GMP from XMP (L-Gln route): step 1/1. Catalyzes the synthesis of GMP from XMP. The polypeptide is GMP synthase [glutamine-hydrolyzing] (Burkholderia ambifaria (strain ATCC BAA-244 / DSM 16087 / CCUG 44356 / LMG 19182 / AMMD) (Burkholderia cepacia (strain AMMD))).